Reading from the N-terminus, the 155-residue chain is Fibroblast growth factor 1 (155 aa).

The residue at position 2 (Ala2) is an N-acetylalanine. Residues 24–27 (KKPK) carry the Nuclear localization signal motif. Residues 24 to 28 (KKPKL) and 113 to 116 (ISKK) each bind heparin.

The protein belongs to the heparin-binding growth factors family. In terms of assembly, monomer. Homodimer. Interacts with FGFR1, FGFR2, FGFR3 and FGFR4. Affinity between fibroblast growth factors (FGFs) and their receptors is increased by heparan sulfate glycosaminoglycans that function as coreceptors. Found in a complex with FGFBP1, FGF1 and FGF2. Interacts with FGFBP1. Part of a Cu(2+)-dependent multiprotein aggregate containing FGF1, S100A13 and SYT1. Interacts with S100A13. Interacts with FGFBP1. Interacts with LRRC59. Interacts with CSNKA, CSNKB and FIBP. While binding with LRRC59, CSNKA and FIBP seem mutually exclusive, CSNKB and FIBP may cooperatively interact with FGF1. Interacts with SYT1. Forms a ternary complex with FGFR1 and ITGAV:ITGB3 and induces the recruitment of PTPN11 to the complex. Post-translationally, in the nucleus, phosphorylated by PKC/PRKCD.

It is found in the secreted. The protein resides in the cytoplasm. It localises to the cell cortex. The protein localises to the cytosol. Its subcellular location is the nucleus. Its function is as follows. Plays an important role in the regulation of cell survival, cell division, angiogenesis, cell differentiation and cell migration. Functions as a potent mitogen in vitro. Acts as a ligand for FGFR1 and integrins. Binds to FGFR1 in the presence of heparin leading to FGFR1 dimerization and activation via sequential autophosphorylation on tyrosine residues which act as docking sites for interacting proteins, leading to the activation of several signaling cascades. Binds to integrin ITGAV:ITGB3. Its binding to integrin, subsequent ternary complex formation with integrin and FGFR1, and the recruitment of PTPN11 to the complex are essential for FGF1 signaling. Induces the phosphorylation and activation of FGFR1, FRS2, MAPK3/ERK1, MAPK1/ERK2 and AKT1. Can induce angiogenesis. The polypeptide is Fibroblast growth factor 1 (FGF1) (Bos taurus (Bovine)).